A 361-amino-acid polypeptide reads, in one-letter code: MTPTVTVQLTDDTAKRFEGHAKLLAIGTATPTNWVDQATYPDFYFRITNSEHLLEHKEKFRRICNKSKIRKRHLVLTEELLKENPNLCTYNDASLNTRQDILVSEVPKLGKEAAMKAIKEWGRPISEITHLVFCTTSGVDMPGADFQLTKLLGLNSSVKRLMMYQQGCNAGAAMLRLVKGLAENNKGARVLVVCSGITINIFRGPSLEQDDNLLAQCLFGDGSAAMIDGKDPRPGLETPLFELVSSAQTIVPNTDSHLKLHLREMGLTFHCSRAVPSVLAENVEDCLVKAFEPYGISDWNSIFWVFHPGGNAIVDRVEERSGLGPERLRASRDVLSEYGNLTSACVLFILDEMRKKSKKDE.

Residue Cys168 is part of the active site.

The protein belongs to the thiolase-like superfamily. Chalcone/stilbene synthases family.

It carries out the reaction (E)-4-coumaroyl-CoA + 3 malonyl-CoA + 3 H(+) = 2',4,4',6'-tetrahydroxychalcone + 3 CO2 + 4 CoA. It participates in secondary metabolite biosynthesis; flavonoid biosynthesis. Functionally, the primary product of this enzyme is 4,2',4',6'-tetrahydroxychalcone (also termed naringenin-chalcone or chalcone) which can under specific conditions spontaneously isomerize into naringenin. The protein is Chalcone synthase A (CHSA) of Ipomoea cordatotriloba (Tievine).